A 344-amino-acid polypeptide reads, in one-letter code: Succinylglutamate desuccinylase (344 aa).

3 residues coordinate Zn(2+): histidine 63, glutamate 66, and histidine 160. Glutamate 224 is a catalytic residue.

Belongs to the AspA/AstE family. Succinylglutamate desuccinylase subfamily. Zn(2+) serves as cofactor.

It carries out the reaction N-succinyl-L-glutamate + H2O = L-glutamate + succinate. Its pathway is amino-acid degradation; L-arginine degradation via AST pathway; L-glutamate and succinate from L-arginine: step 5/5. Functionally, transforms N(2)-succinylglutamate into succinate and glutamate. The chain is Succinylglutamate desuccinylase from Shewanella baltica (strain OS223).